The following is a 546-amino-acid chain: Chaperonin GroEL 2 (546 aa).

ATP is bound by residues 30 to 33 (TLGP), lysine 51, 87 to 91 (DGTTT), glycine 415, 479 to 481 (NAA), and aspartate 495.

This sequence belongs to the chaperonin (HSP60) family. In terms of assembly, forms a cylinder of 14 subunits composed of two heptameric rings stacked back-to-back. Interacts with the co-chaperonin GroES.

Its subcellular location is the cytoplasm. The enzyme catalyses ATP + H2O + a folded polypeptide = ADP + phosphate + an unfolded polypeptide.. Together with its co-chaperonin GroES, plays an essential role in assisting protein folding. The GroEL-GroES system forms a nano-cage that allows encapsulation of the non-native substrate proteins and provides a physical environment optimized to promote and accelerate protein folding. This chain is Chaperonin GroEL 2, found in Chromobacterium violaceum (strain ATCC 12472 / DSM 30191 / JCM 1249 / CCUG 213 / NBRC 12614 / NCIMB 9131 / NCTC 9757 / MK).